Consider the following 94-residue polypeptide: Large ribosomal subunit protein bL25 (94 aa).

This sequence belongs to the bacterial ribosomal protein bL25 family. In terms of assembly, part of the 50S ribosomal subunit; part of the 5S rRNA/L5/L18/L25 subcomplex. Contacts the 5S rRNA. Binds to the 5S rRNA independently of L5 and L18.

Functionally, this is one of the proteins that binds to the 5S RNA in the ribosome where it forms part of the central protuberance. The sequence is that of Large ribosomal subunit protein bL25 from Cronobacter sakazakii (strain ATCC BAA-894) (Enterobacter sakazakii).